We begin with the raw amino-acid sequence, 757 residues long: Exo-alpha-(1-&gt;6)-L-arabinopyranosidase (757 aa).

Residue D232 is part of the active site.

This sequence belongs to the glycosyl hydrolase 3 family. Homotetramer.

Completely inhibited by Cu(2+) and Fe(2+). Functionally, catalyzes the hydrolysis of a non-reducing terminal alpha-L-arabinopyranosidic linkage in ginsenoside Rb2 (alpha-L-arabinopyranosyl-(1-&gt;6)-alpha-D-glucopyranosyl) to release alpha-D-glucopyranosyl (Rd). It is not able to hydrolyze alpha-L-arabinofuranosyl-(1-&gt;6)-alpha-D-glucopyranosyl (Rc). This Bifidobacterium breve (strain ACS-071-V-Sch8b) protein is Exo-alpha-(1-&gt;6)-L-arabinopyranosidase.